The sequence spans 265 residues: MTESREPHVAGSAAPRPEPANGLASGQPSSRARYSRVLLKLGGEMFGGGQVGLDPDVVAQVARQIAEVVRGGVQVAVVIGGGNFFRGAQLQQRGMERTRSDYMGMLGTVMNSLALQDFLEKEGIVTRVQTAITMGQVAEPYLPLRAVRHLEKGRVVIFGAGMGLPYFSTDTTAAQRALEIGAEVVLMAKAVDGVFSADPRQYPEAELITAISHREVIDRGLRVADATAFSLCMDNGMPILVFNLLTNGNIARAVAGEKIGTLVTT.

The disordered stretch occupies residues 1–29 (MTESREPHVAGSAAPRPEPANGLASGQPS). 40 to 43 (KLGG) is a binding site for ATP. G81 lines the UMP pocket. ATP-binding residues include G82 and R86. UMP-binding positions include D101 and 162–169 (MGLPYFST). ATP-binding residues include F195 and D198.

This sequence belongs to the UMP kinase family. In terms of assembly, homohexamer.

It localises to the cytoplasm. It carries out the reaction UMP + ATP = UDP + ADP. Its pathway is pyrimidine metabolism; CTP biosynthesis via de novo pathway; UDP from UMP (UMPK route): step 1/1. With respect to regulation, inhibited by UTP. Functionally, catalyzes the reversible phosphorylation of UMP to UDP. The chain is Uridylate kinase from Mycobacterium avium (strain 104).